Consider the following 63-residue polypeptide: Cytotoxin homolog S3C2 (63 aa).

Disulfide bonds link C3-C22, C15-C40, C44-C55, and C56-C61.

Belongs to the three-finger toxin family. Short-chain subfamily. Orphan group XVI sub-subfamily. In terms of tissue distribution, expressed by the venom gland.

It localises to the secreted. In Aspidelaps scutatus (Shield-nose snake), this protein is Cytotoxin homolog S3C2.